A 1009-amino-acid polypeptide reads, in one-letter code: Kinesin-like protein KIN-5C (1009 aa).

The region spanning 12–359 is the Kinesin motor domain; the sequence is NVQVLLRCRP…LDYAHRAKNI (348 aa). 98-105 serves as a coordination point for ATP; sequence GQTGTGKT. A coiled-coil region spans residues 406–526; the sequence is YQEESERKVM…NSSLHQKIGR (121 aa). 2 disordered regions span residues 862–882 and 987–1009; these read SNEQ…KDVT and YESF…SQVN. 2 stretches are compositionally biased toward basic and acidic residues: residues 863–882 and 987–996; these read NEQH…KDVT and YESFATKETK. Positions 997 to 1009 are enriched in polar residues; that stretch reads PQQLTRSPLSQVN.

This sequence belongs to the TRAFAC class myosin-kinesin ATPase superfamily. Kinesin family. KIN-5/BimC subfamily.

It localises to the cytoplasm. It is found in the cytoskeleton. Its subcellular location is the spindle. Responsible for microtubule translocation. May be important for the organization of phragmoplast-specific arrays of microtubules. Plays an essential role in stabilizing the mitotic spindle. Required during mitotic cytokinesis. This Arabidopsis thaliana (Mouse-ear cress) protein is Kinesin-like protein KIN-5C.